Consider the following 504-residue polypeptide: Glucose-6-phosphate isomerase (504 aa).

Glutamate 333 functions as the Proton donor in the catalytic mechanism. Active-site residues include histidine 364 and lysine 473.

Belongs to the GPI family.

The protein resides in the cytoplasm. The enzyme catalyses alpha-D-glucose 6-phosphate = beta-D-fructose 6-phosphate. It functions in the pathway carbohydrate biosynthesis; gluconeogenesis. It participates in carbohydrate degradation; glycolysis; D-glyceraldehyde 3-phosphate and glycerone phosphate from D-glucose: step 2/4. Catalyzes the reversible isomerization of glucose-6-phosphate to fructose-6-phosphate. The protein is Glucose-6-phosphate isomerase of Xanthomonas axonopodis pv. citri (strain 306).